A 1295-amino-acid chain; its full sequence is DNA-directed RNA polymerase subunit beta' (1295 aa).

Residues Cys-60, Cys-62, Cys-75, and Cys-78 each coordinate Zn(2+). Residues Asp-516, Asp-518, and Asp-520 each contribute to the Mg(2+) site. Positions 841, 914, 921, and 924 each coordinate Zn(2+).

The protein belongs to the RNA polymerase beta' chain family. The RNAP catalytic core consists of 2 alpha, 1 beta, 1 beta' and 1 omega subunit. When a sigma factor is associated with the core the holoenzyme is formed, which can initiate transcription. It depends on Mg(2+) as a cofactor. The cofactor is Zn(2+).

The enzyme catalyses RNA(n) + a ribonucleoside 5'-triphosphate = RNA(n+1) + diphosphate. Its function is as follows. DNA-dependent RNA polymerase catalyzes the transcription of DNA into RNA using the four ribonucleoside triphosphates as substrates. This Dehalococcoides mccartyi (strain ATCC BAA-2266 / KCTC 15142 / 195) (Dehalococcoides ethenogenes (strain 195)) protein is DNA-directed RNA polymerase subunit beta'.